Here is a 61-residue protein sequence, read N- to C-terminus: Potassium channel toxin kappa-KTx 2.8 (61 aa).

The N-terminal stretch at 1–21 is a signal peptide; sequence GTVYVFLLLLAFGIFTDISNA. Positions 22–35 are excised as a propeptide; it reads CSEQMDDEDSYEVE. 2 disulfides stabilise this stretch: Cys41–Cys59 and Cys45–Cys55.

It belongs to the short scorpion toxin superfamily. Potassium channel inhibitor kappa-KTx family. Kappa-KTx 2 subfamily. Expressed by the venom gland.

Its subcellular location is the secreted. Voltage-gated potassium channel inhibitor (Kv) that acts on Kv1.3/KCNA3 and Kv7.1/KCNQ1. 1 uM of the toxin inhibits Kv1.3/KCNA3 currents by 35.1%, whereas 10 uM of the toxin inhibits Kv7.1/KCNQ1 currents by 44.9%. This is Potassium channel toxin kappa-KTx 2.8 from Heterometrus petersii (Asian forest scorpion).